A 446-amino-acid polypeptide reads, in one-letter code: MSLRLSSGSRRSYARPSTGSLRGASFGAGNACGVAGIGSGFSCAFGGSSTGGNTGVANSCAGFTVNEGGLLSGNEKVTMQNLNDRLASYLDNVQALQEANADLEQKIKGWYEKFGPGSCRGLDHDYSRYFPIIDDLKNQIITSTTSNANAVLQIDNARLTADDFRLKYENELALHQSVEADVNGLRRVLDEITLCRTDLEIQYETLSEELTYLKKNHKEEMQALQCAAGGNVNVEMNAAPGVDLTVLLNNMRAEYEALAEQNRRDAEAWFQEKSASLQQQITEDVGATTSARNELTEMKRTLQTLEIELQSLLATKHSLECSLTETEGNYCTQLAQIQAQISALEEQLHQVRTETEGQKLEYEQLLNVKAHLEKEIETYCLLIGGDEGACKSSSYKSKDYGSGNAGNQIKDPVKAIVVKKVLEEVDQRSKILTTRLHSLEEKSQSN.

Residues 1–74 (MSLRLSSGSR…VNEGGLLSGN (74 aa)) are head. The interval 75–110 (EKVTMQNLNDRLASYLDNVQALQEANADLEQKIKGW) is coil 1A. The 316-residue stretch at 75 to 390 (EKVTMQNLND…LLIGGDEGAC (316 aa)) folds into the IF rod domain. Positions 111 to 132 (YEKFGPGSCRGLDHDYSRYFPI) are linker 1. Residues 133–224 (IDDLKNQIIT…KNHKEEMQAL (92 aa)) are coil 1B. Residues 225-247 (QCAAGGNVNVEMNAAPGVDLTVL) are linker 12. A coil 2 region spans residues 248–386 (LNNMRAEYEA…ETYCLLIGGD (139 aa)). Residues 387 to 446 (EGACKSSSYKSKDYGSGNAGNQIKDPVKAIVVKKVLEEVDQRSKILTTRLHSLEEKSQSN) form a tail region. S438 is subject to Phosphoserine.

It belongs to the intermediate filament family. Heterodimer of a type I and a type II keratin. Heterodimer with type II keratin KRT5 leading to the formation of keratin intermediate filament (KIF) network. Interacts with KRT6A to form filaments.

The protein resides in the cytoplasm. Essential for the proper assembly of type I and type II keratin protein complexes and formation of keratin intermediate filaments in the inner root sheath (irs). Plays a role in the cytoskeleton organization. In Mus musculus (Mouse), this protein is Keratin, type I cytoskeletal 25.